Consider the following 518-residue polypeptide: Protein translocase subunit SecD (518 aa).

The next 6 helical transmembrane spans lie at 9–29 (IFLS…NFMQ), 361–381 (LIGF…LGLF), 384–404 (IALS…QATL), 406–426 (LPGI…NVLI), 452–474 (FATI…IFGV), and 486–506 (IGII…IDIW).

It belongs to the SecD/SecF family. SecD subfamily. In terms of assembly, forms a complex with SecF. Part of the essential Sec protein translocation apparatus which comprises SecA, SecYEG and auxiliary proteins SecDF-YajC and YidC.

The protein localises to the cell inner membrane. Functionally, part of the Sec protein translocase complex. Interacts with the SecYEG preprotein conducting channel. SecDF uses the proton motive force (PMF) to complete protein translocation after the ATP-dependent function of SecA. The polypeptide is Protein translocase subunit SecD (Rickettsia conorii (strain ATCC VR-613 / Malish 7)).